The sequence spans 505 residues: Peroxisome proliferator-activated receptor gamma (505 aa).

O-linked (GlcNAc) threonine glycosylation occurs at Thr-84. A Phosphoserine; by MAPK modification is found at Ser-112. The segment at residues 136–210 (AIECRVCGDK…VGMSHNAIRF (75 aa)) is a DNA-binding region (nuclear receptor). 2 NR C4-type zinc fingers span residues 139 to 159 (CRVCGDKASGFHYGVHACEGC) and 176 to 198 (CDLNCRIHKKSRNKCQYCRFQKC). Positions 205 to 280 (HNAIRFGRMP…DKSPFVIYDM (76 aa)) are interaction with FAM120B. The 266-residue stretch at 238–503 (DLRALAKHLY…HPLLQEIYKD (266 aa)) folds into the NR LBD domain. Lys-252 is covalently cross-linked (Glycyl lysine isopeptide (Lys-Gly) (interchain with G-Cter in ubiquitin)). Positions 495-503 (PLLQEIYKD) match the 9aaTAD motif.

The protein belongs to the nuclear hormone receptor family. NR1 subfamily. As to quaternary structure, interacts with FOXO1 (acetylated form). Heterodimer with other nuclear receptors, such as RXRA. The heterodimer with the retinoic acid receptor RXRA is called adipocyte-specific transcription factor ARF6. Interacts with NCOA6 coactivator, leading to a strong increase in transcription of target genes. Interacts with coactivator PPARBP, leading to a mild increase in transcription of target genes. Interacts with NOCA7 in a ligand-inducible manner. Interacts with NCOA1 and NCOA2 LXXLL motifs. Interacts with ASXL1, ASXL2, DNTTIP2, FAM120B, MAP2K1/MEK1, NR0B2, PDPK1, PRDM16, PRMT2 and TGFB1I1. Interacts (when activated by agonist) with PPP5C. Interacts with HELZ2 and THRAP3; the interaction stimulates the transcriptional activity of PPARG. Interacts with PER2, the interaction is ligand dependent and blocks PPARG recruitment to target promoters. Interacts with NOCT. Interacts with ACTN4. Interacts (when in the liganded conformation) with GPS2. Interacts with CRY1 and CRY2 in a ligand-dependent manner. In the absence of hormonal ligand, interacts with TACC1. In macrophages, interacts with PAQR3 and STUB1; the interactions promote PPARG poylubiquitination and STUB1-mediated degradation. In terms of processing, O-GlcNAcylation at Thr-84 reduces transcriptional activity in adipocytes. Post-translationally, phosphorylated at basal conditions and dephosphorylated when treated with the ligand. May be dephosphorylated by PPP5C. The phosphorylated form may be inactive and dephosphorylation induces adipogenic activity. Ubiquitinated by E3 ubiquitin-protein ligase complex containing FBXO9; leading to proteasomal degradation. Ubiquitinated at Lys-252 by TRIM55 leading to proteasomal degradation. Ubiquitinated by E3 ubiquitin-protein ligase STUB1/CHIP; leading to proteasomal degradation. As to expression, highest expression in adipose tissue. Lower in liver, heart, kidney, stomach, duodenum and colon.

Its subcellular location is the nucleus. It is found in the cytoplasm. Its activity is regulated as follows. PDPK1 activates its transcriptional activity independently of its kinase activity. Nuclear receptor that binds peroxisome proliferators such as hypolipidemic drugs and fatty acids. Once activated by a ligand, the nuclear receptor binds to DNA specific PPAR response elements (PPRE) and modulates the transcription of its target genes, such as acyl-CoA oxidase. It therefore controls the peroxisomal beta-oxidation pathway of fatty acids. Key regulator of adipocyte differentiation and glucose homeostasis. ARF6 acts as a key regulator of the tissue-specific adipocyte P2 (aP2) enhancer. Acts as a critical regulator of gut homeostasis by suppressing NF-kappa-B-mediated pro-inflammatory responses. Plays a role in the regulation of cardiovascular circadian rhythms by regulating the transcription of BMAL1 in the blood vessels. This chain is Peroxisome proliferator-activated receptor gamma (PPARG), found in Macaca mulatta (Rhesus macaque).